The sequence spans 149 residues: MKVILLRDVPKIGKKGEIKEVSDGYARNYLIPRGFAKEYTEGLERAIKHEKEIEKRKKEREREESEKILKELKKRTHVVKVKAGEGGKIFGAVTAATVAEEISKTTGLKLDKRWFKLDKPIKELGEYSLEVSLPGGVKDTIKIRVEREE.

This sequence belongs to the bacterial ribosomal protein bL9 family.

Binds to the 23S rRNA. The chain is Large ribosomal subunit protein bL9 from Thermotoga maritima (strain ATCC 43589 / DSM 3109 / JCM 10099 / NBRC 100826 / MSB8).